Consider the following 290-residue polypeptide: Lipoyl synthase (290 aa).

Residues cysteine 38, cysteine 43, cysteine 49, cysteine 64, cysteine 68, cysteine 71, and serine 277 each coordinate [4Fe-4S] cluster. Residues 50 to 266 (WSKGTATFLL…REIALDAGFR (217 aa)) enclose the Radical SAM core domain.

It belongs to the radical SAM superfamily. Lipoyl synthase family. [4Fe-4S] cluster serves as cofactor.

It localises to the cytoplasm. The catalysed reaction is [[Fe-S] cluster scaffold protein carrying a second [4Fe-4S](2+) cluster] + N(6)-octanoyl-L-lysyl-[protein] + 2 oxidized [2Fe-2S]-[ferredoxin] + 2 S-adenosyl-L-methionine + 4 H(+) = [[Fe-S] cluster scaffold protein] + N(6)-[(R)-dihydrolipoyl]-L-lysyl-[protein] + 4 Fe(3+) + 2 hydrogen sulfide + 2 5'-deoxyadenosine + 2 L-methionine + 2 reduced [2Fe-2S]-[ferredoxin]. It participates in protein modification; protein lipoylation via endogenous pathway; protein N(6)-(lipoyl)lysine from octanoyl-[acyl-carrier-protein]: step 2/2. In terms of biological role, catalyzes the radical-mediated insertion of two sulfur atoms into the C-6 and C-8 positions of the octanoyl moiety bound to the lipoyl domains of lipoate-dependent enzymes, thereby converting the octanoylated domains into lipoylated derivatives. This chain is Lipoyl synthase, found in Chlorobaculum tepidum (strain ATCC 49652 / DSM 12025 / NBRC 103806 / TLS) (Chlorobium tepidum).